We begin with the raw amino-acid sequence, 359 residues long: Popy class I histocompatibility antigen, alpha chain E (359 aa).

The N-terminal stretch at 1–18 (GTLLLLLSEALALTETWA) is a signal peptide. The segment at 19-108 (GSHSLKYFHT…LRGYYNQTEA (90 aa)) is alpha-1. The Extracellular portion of the chain corresponds to 19-302 (GSHSLKYFHT…EPASQTTIPI (284 aa)). An N-linked (GlcNAc...) asparagine glycan is attached at N104. An alpha-2 region spans residues 109–200 (GSHTLQWMHG…EKGKETLLHL (92 aa)). 2 disulfide bridges follow: C119–C182 and C221–C277. Residues 201 to 292 (DPPKTHVTHH…GLPEPLTLRW (92 aa)) form an alpha-3 region. The 89-residue stretch at 203-291 (PKTHVTHHRI…EGLPEPLTLR (89 aa)) folds into the Ig-like C1-type domain. Residues 293-302 (EPASQTTIPI) are connecting peptide. The chain crosses the membrane as a helical span at residues 303-326 (VGIFAGLVLLGAVVTGATVVAAVM). The Cytoplasmic portion of the chain corresponds to 327-359 (WRKKSSGGKGGSYSKAEWSDSAQGSESLTACKA). The interval 330-359 (KSSGGKGGSYSKAEWSDSAQGSESLTACKA) is disordered. Residues 346 to 359 (DSAQGSESLTACKA) are compositionally biased toward polar residues. A Phosphoserine modification is found at S351.

The protein belongs to the MHC class I family. Heterodimer of an alpha chain and a beta chain (beta-2-microglobulin).

The protein localises to the membrane. Involved in the presentation of foreign antigens to the immune system. The sequence is that of Popy class I histocompatibility antigen, alpha chain E (Popy-E) from Pongo pygmaeus (Bornean orangutan).